We begin with the raw amino-acid sequence, 247 residues long: Cell division protein ZapD (247 aa).

The protein belongs to the ZapD family. In terms of assembly, interacts with FtsZ.

It is found in the cytoplasm. In terms of biological role, cell division factor that enhances FtsZ-ring assembly. Directly interacts with FtsZ and promotes bundling of FtsZ protofilaments, with a reduction in FtsZ GTPase activity. The chain is Cell division protein ZapD from Shigella sonnei (strain Ss046).